The chain runs to 231 residues: Putative Nudix hydrolase FPV054 (231 aa).

Residues Ser74 to Phe217 enclose the Nudix hydrolase domain. A Nudix box motif is present at residues Gly125–Asp146. A Mg(2+)-binding site is contributed by Glu131. The active-site Nucleophile is Glu140. Glu144 and Asp165 together coordinate Mg(2+).

This sequence belongs to the Nudix hydrolase family. The cofactor is Mg(2+). Mn(2+) serves as cofactor.

Functionally, decapping enzyme required for the removal of the 5'-end m7GpppN cap tethered to viral and host mRNAs to allow their decay in cells. May therefore accelerate viral and cellular mRNA turnover to eliminate competing host mRNAs and allow stage-specific synthesis of viral proteins. Acceleration of the turnover of cellular transcripts may even promote the shutoff of host protein synthesis. Does not cleave unmethylated RNAs or RNAs shorter than 24 nucleotides. The chain is Putative Nudix hydrolase FPV054 from Vertebrata (FPV).